The sequence spans 591 residues: Guanylate-binding protein 2 (591 aa).

The GTPase domain (Globular) stretch occupies residues 1–309; sequence MAPEINLPGP…NAISSGDLPC (309 aa). Positions 35–276 constitute a GB1/RHD3-type G domain; it reads TQPVVVVAIV…FCSYILSHSN (242 aa). GTP contacts are provided by residues 45-52, 181-182, and Leu-245; these read GLYRTGKS and RD. Cys-588 carries the cysteine methyl ester modification. Cys-588 carries the S-geranylgeranyl cysteine lipid modification. The propeptide at 589-591 is removed in mature form; the sequence is NIL.

Belongs to the TRAFAC class dynamin-like GTPase superfamily. GB1/RHD3 GTPase family. GB1 subfamily. In terms of assembly, homodimer; homodimerization occurs upon GTP-binding and is required for the association with membranous structures. Heterodimer with other family members, including GBP1, GBP3, GBP4 and GBP5. (Microbial infection) Ubiquitinated by S.flexneri IpaH9.8, leading to its degradation by the proteasome, thereby preventing its ability to promote host defense against bacterial infection. Post-translationally, isoprenylation is required for proper subcellular location.

It is found in the cytoplasmic vesicle membrane. It localises to the golgi apparatus membrane. Its subcellular location is the cytoplasm. The protein localises to the perinuclear region. It catalyses the reaction GTP + H2O = GDP + phosphate + H(+). Functionally, interferon (IFN)-inducible GTPase that plays important roles in innate immunity against a diverse range of bacterial, viral and protozoan pathogens. Hydrolyzes GTP to GMP in 2 consecutive cleavage reactions, but the major reaction product is GDP. Following infection, recruited to the pathogen-containing vacuoles or vacuole-escaped bacteria and acts as a positive regulator of inflammasome assembly by promoting the release of inflammasome ligands from bacteria. Acts by promoting lysis of pathogen-containing vacuoles, releasing pathogens into the cytosol. Following pathogen release in the cytosol, promotes recruitment of proteins that mediate bacterial cytolysis: this liberates ligands that are detected by inflammasomes, such as lipopolysaccharide (LPS) that activates the non-canonical CASP4/CASP11 inflammasome or double-stranded DNA (dsDNA) that activates the AIM2 inflammasome. Confers protection to the protozoan pathogen Toxoplasma gondii. Independently of its GTPase activity, acts as an inhibitor of various viruses infectivity, such as HIV-1, Zika and influenza A viruses, by inhibiting FURIN-mediated maturation of viral envelope proteins. This Homo sapiens (Human) protein is Guanylate-binding protein 2.